The chain runs to 196 residues: Nucleoid occlusion factor SlmA (196 aa).

The 62-residue stretch at 7–68 (INRREEILQA…GLIEFIEESL (62 aa)) folds into the HTH tetR-type domain. The segment at residues 31–50 (TTAKLAKQVGVSEAALYRHF) is a DNA-binding region (H-T-H motif). Residues 110-139 (HALMFENERLRDRINQLFERIETSLRQILR) are a coiled coil.

It belongs to the nucleoid occlusion factor SlmA family. As to quaternary structure, homodimer. Interacts with FtsZ.

The protein localises to the cytoplasm. Its subcellular location is the nucleoid. In terms of biological role, required for nucleoid occlusion (NO) phenomenon, which prevents Z-ring formation and cell division over the nucleoid. Acts as a DNA-associated cell division inhibitor that binds simultaneously chromosomal DNA and FtsZ, and disrupts the assembly of FtsZ polymers. SlmA-DNA-binding sequences (SBS) are dispersed on non-Ter regions of the chromosome, preventing FtsZ polymerization at these regions. The sequence is that of Nucleoid occlusion factor SlmA from Vibrio cholerae serotype O1 (strain ATCC 39315 / El Tor Inaba N16961).